A 268-amino-acid chain; its full sequence is Hydroxyethylthiazole kinase (268 aa).

Met45 provides a ligand contact to substrate. ATP contacts are provided by Arg121 and Thr167. Residue Gly194 participates in substrate binding.

The protein belongs to the Thz kinase family. Requires Mg(2+) as cofactor.

The enzyme catalyses 5-(2-hydroxyethyl)-4-methylthiazole + ATP = 4-methyl-5-(2-phosphooxyethyl)-thiazole + ADP + H(+). It functions in the pathway cofactor biosynthesis; thiamine diphosphate biosynthesis; 4-methyl-5-(2-phosphoethyl)-thiazole from 5-(2-hydroxyethyl)-4-methylthiazole: step 1/1. In terms of biological role, catalyzes the phosphorylation of the hydroxyl group of 4-methyl-5-beta-hydroxyethylthiazole (THZ). This Bacillus cereus (strain Q1) protein is Hydroxyethylthiazole kinase.